A 220-amino-acid chain; its full sequence is UPF0502 protein PSPPH_2577 (220 aa).

This sequence belongs to the UPF0502 family.

The polypeptide is UPF0502 protein PSPPH_2577 (Pseudomonas savastanoi pv. phaseolicola (strain 1448A / Race 6) (Pseudomonas syringae pv. phaseolicola (strain 1448A / Race 6))).